A 333-amino-acid chain; its full sequence is Flap endonuclease 1 (333 aa).

Residues 1–99 (MGVALREVLT…ETIESRREVR (99 aa)) are N-domain. Positions 28, 81, 153, 155, 174, 176, and 235 each coordinate Mg(2+). The interval 117-256 (EAYKQARASS…TALKIVKKDG (140 aa)) is I-domain. The segment at 325-333 (GQKTLDRWF) is interaction with PCNA.

This sequence belongs to the XPG/RAD2 endonuclease family. FEN1 subfamily. In terms of assembly, interacts with PCNA. PCNA stimulates the nuclease activity without altering cleavage specificity. Requires Mg(2+) as cofactor.

Its function is as follows. Structure-specific nuclease with 5'-flap endonuclease and 5'-3' exonuclease activities involved in DNA replication and repair. During DNA replication, cleaves the 5'-overhanging flap structure that is generated by displacement synthesis when DNA polymerase encounters the 5'-end of a downstream Okazaki fragment. Binds the unpaired 3'-DNA end and kinks the DNA to facilitate 5' cleavage specificity. Cleaves one nucleotide into the double-stranded DNA from the junction in flap DNA, leaving a nick for ligation. Also involved in the base excision repair (BER) pathway. Acts as a genome stabilization factor that prevents flaps from equilibrating into structures that lead to duplications and deletions. Also possesses 5'-3' exonuclease activity on nicked or gapped double-stranded DNA. In Methanosphaerula palustris (strain ATCC BAA-1556 / DSM 19958 / E1-9c), this protein is Flap endonuclease 1.